The following is a 62-amino-acid chain: Large ribosomal subunit protein bL32 (62 aa).

Positions 1–16 (MAVPKRKTSPMKRGFR) are enriched in basic residues. The tract at residues 1–62 (MAVPKRKTSP…QILTPKNKEA (62 aa)) is disordered. The segment covering 28–44 (VEDKDSGELRRPHHVDL) has biased composition (basic and acidic residues).

This sequence belongs to the bacterial ribosomal protein bL32 family.

The chain is Large ribosomal subunit protein bL32 from Methylocella silvestris (strain DSM 15510 / CIP 108128 / LMG 27833 / NCIMB 13906 / BL2).